Consider the following 174-residue polypeptide: Putative NADH dehydrogenase/NAD(P)H nitroreductase AF_2267 (174 aa).

107 to 112 (AARCLG) provides a ligand contact to NAD(+).

The protein belongs to the nitroreductase family. FMN serves as cofactor.

In Archaeoglobus fulgidus (strain ATCC 49558 / DSM 4304 / JCM 9628 / NBRC 100126 / VC-16), this protein is Putative NADH dehydrogenase/NAD(P)H nitroreductase AF_2267.